Reading from the N-terminus, the 37-residue chain is Large ribosomal subunit protein bL36 (37 aa).

This sequence belongs to the bacterial ribosomal protein bL36 family.

In Leptospira biflexa serovar Patoc (strain Patoc 1 / Ames), this protein is Large ribosomal subunit protein bL36.